Here is a 150-residue protein sequence, read N- to C-terminus: Lipoprotein signal peptidase (150 aa).

Transmembrane regions (helical) follow at residues 8–28 (FYAL…LAHA), 58–78 (GFSW…GWFL), and 81–101 (TTGS…NVFD). Residues Asp116 and Asp132 contribute to the active site. The helical transmembrane segment at 126-146 (VVFNIADLFILAGVFGTFLFL) threads the bilayer.

The protein belongs to the peptidase A8 family.

It is found in the cell membrane. The catalysed reaction is Release of signal peptides from bacterial membrane prolipoproteins. Hydrolyzes -Xaa-Yaa-Zaa-|-(S,diacylglyceryl)Cys-, in which Xaa is hydrophobic (preferably Leu), and Yaa (Ala or Ser) and Zaa (Gly or Ala) have small, neutral side chains.. Its pathway is protein modification; lipoprotein biosynthesis (signal peptide cleavage). Functionally, this protein specifically catalyzes the removal of signal peptides from prolipoproteins. This Tropheryma whipplei (strain Twist) (Whipple's bacillus) protein is Lipoprotein signal peptidase.